The following is a 441-amino-acid chain: Hexane cyclase gkaB (441 aa).

The first 25 residues, 1 to 25, serve as a signal peptide directing secretion; sequence MTKFLAGAAIVLAVAFGSFFSQSST. Residues N77, N153, N184, and N308 are each glycosylated (N-linked (GlcNAc...) asparagine).

Belongs to the Diels-Alderase family.

It functions in the pathway mycotoxin biosynthesis. In terms of biological role, hexane cyclase; part of the gene cluster that mediates the biosynthesis of GKK1032, fungal natural products containing a macrocyclic para-cyclophane connected to a decahydrofluorene ring system that show potent antitumor activities. Within the pathway, gkaB functions synergistically with gkaX and gkaZ to form the cyclophane. The pathway begins with the PKS-NRPS gkaA which, with the help of the trans-enoyl reductase gkaC, synthesizes the polyketide-tyrosyl acyl thioester product which can be reductively off-loaded by the terminal reductase (R) domain in gkaA. The alpha/beta hydrolase gkaG is then required to catalyze the subsequent Knoevenagel condensation that affords the 3-pyrrolin-2-one ring, whereas the three proteins gkaB, gkaX and gkaZ then function synergistically to form the cyclophane. In Penicillium citrinum, this protein is Hexane cyclase gkaB.